A 454-amino-acid polypeptide reads, in one-letter code: tRNA modification GTPase MnmE (454 aa).

Residues arginine 23, glutamate 80, and lysine 120 each coordinate (6S)-5-formyl-5,6,7,8-tetrahydrofolate. The 162-residue stretch at 216–377 folds into the TrmE-type G domain; it reads GMKVVIAGRP…LRDHLKQSMG (162 aa). Asparagine 226 is a K(+) binding site. GTP-binding positions include 226–231, 245–251, 270–273, 335–338, and 358–360; these read NAGKSS, TDIAGTT, DTAG, NKAD, and SAR. Residue serine 230 participates in Mg(2+) binding. The K(+) site is built by threonine 245, isoleucine 247, and threonine 250. Residue threonine 251 coordinates Mg(2+). Lysine 454 lines the (6S)-5-formyl-5,6,7,8-tetrahydrofolate pocket.

Belongs to the TRAFAC class TrmE-Era-EngA-EngB-Septin-like GTPase superfamily. TrmE GTPase family. In terms of assembly, homodimer. Heterotetramer of two MnmE and two MnmG subunits. K(+) is required as a cofactor.

The protein resides in the cytoplasm. In terms of biological role, exhibits a very high intrinsic GTPase hydrolysis rate. Involved in the addition of a carboxymethylaminomethyl (cmnm) group at the wobble position (U34) of certain tRNAs, forming tRNA-cmnm(5)s(2)U34. The polypeptide is tRNA modification GTPase MnmE (Yersinia pseudotuberculosis serotype IB (strain PB1/+)).